The chain runs to 448 residues: MANVVENLGKLERRVTISLPKDAVQKEVDSRIRQLAKNVRMPGFRPGKVPLKMVTQQYAGQVEAEVLSDKVGKQFFDISRAENLRVAGQPSFAPKADAVEGDYAFDATFEVYPEVKLGDVATAEIERTKTTISDAEIDRTLDILRKQRVHYHARGEAGEHGDGGADTAAKDGDRVTVDFVGKIDGEAFQGGTADDFAFVLGEGRMLPEFEKAALGLKVGESKEFDLAFPEDYHGKEVAGKTAQFAITMKKIEWPHLPEIDAEFAKSLGIEDGDLTKMRNEIRDNLEREAKRRTQAVVKNQVMDALLKISELDVPKALIEQDQQRLVEMARQDLVQRGVPNAKDAPIPAEMFAEQAERRVKLGLVLAELVKANELQAKPEQIRAEVDEFAKSYEDPKEVVRWYYSNQQRLAEMEAYVVESNVVDFVLSKAKVTDKEVSFEELASATAQA.

The region spanning 172-257 is the PPIase FKBP-type domain; it reads GDRVTVDFVG…MKKIEWPHLP (86 aa).

It belongs to the FKBP-type PPIase family. Tig subfamily.

The protein resides in the cytoplasm. It catalyses the reaction [protein]-peptidylproline (omega=180) = [protein]-peptidylproline (omega=0). Involved in protein export. Acts as a chaperone by maintaining the newly synthesized protein in an open conformation. Functions as a peptidyl-prolyl cis-trans isomerase. This Paraburkholderia phymatum (strain DSM 17167 / CIP 108236 / LMG 21445 / STM815) (Burkholderia phymatum) protein is Trigger factor.